The chain runs to 302 residues: Aspartate carbamoyltransferase catalytic subunit (302 aa).

Residues Arg54 and Thr55 each contribute to the carbamoyl phosphate site. An L-aspartate-binding site is contributed by Lys82. Positions 104, 132, and 135 each coordinate carbamoyl phosphate. L-aspartate is bound by residues Arg165 and Arg217. Residues Gly257 and Pro258 each contribute to the carbamoyl phosphate site.

Belongs to the aspartate/ornithine carbamoyltransferase superfamily. ATCase family. Heterododecamer (2C3:3R2) of six catalytic PyrB chains organized as two trimers (C3), and six regulatory PyrI chains organized as three dimers (R2).

It carries out the reaction carbamoyl phosphate + L-aspartate = N-carbamoyl-L-aspartate + phosphate + H(+). Its pathway is pyrimidine metabolism; UMP biosynthesis via de novo pathway; (S)-dihydroorotate from bicarbonate: step 2/3. Functionally, catalyzes the condensation of carbamoyl phosphate and aspartate to form carbamoyl aspartate and inorganic phosphate, the committed step in the de novo pyrimidine nucleotide biosynthesis pathway. The sequence is that of Aspartate carbamoyltransferase catalytic subunit from Thermus thermophilus (strain ATCC BAA-163 / DSM 7039 / HB27).